A 221-amino-acid polypeptide reads, in one-letter code: Serine/arginine-rich splicing factor 9 (221 aa).

2 consecutive RRM domains span residues 14–89 and 111–187; these read GRIY…FPRT and FRVL…PERS. A Glycyl lysine isopeptide (Lys-Gly) (interchain with G-Cter in SUMO2) cross-link involves residue Lys-36. Residues 188–200 are interaction with SAFB1; it reads TSYGYSRSRSGSR. Ser-189 is subject to Phosphoserine. A compositionally biased stretch (low complexity) spans 189 to 198; that stretch reads SYGYSRSRSG. The disordered stretch occupies residues 189 to 221; the sequence is SYGYSRSRSGSRGRDSPYQSRGSPHYFSPFRPY. Tyr-192 is subject to Phosphotyrosine. Residues Ser-193, Ser-195, Ser-204, Ser-208, and Ser-211 each carry the phosphoserine modification. Phosphotyrosine is present on Tyr-214. At Ser-216 the chain carries Phosphoserine.

It belongs to the splicing factor SR family. As to quaternary structure, interacts with KHDRBS3. Interacts with HABP4. Interacts with NOL3/ARC/NOP30. Interacts with NSEP1/YB-1/YB1. Interacts with SAFB/SAFB1. Interacts with SRSF6/SFRS6. Interacts with TRA2B/SFRS10. Interacts with C1QBP. May also interact with DUSP11/PIR1. Extensively phosphorylated on serine residues in the RS domain. As to expression, expressed at high levels in the heart, kidney, pancreas and placenta, and at lower levels in the brain, liver, lung and skeletal muscle.

It localises to the nucleus. Its function is as follows. Plays a role in constitutive splicing and can modulate the selection of alternative splice sites. Represses the splicing of MAPT/Tau exon 10. The chain is Serine/arginine-rich splicing factor 9 (SRSF9) from Homo sapiens (Human).